The chain runs to 360 residues: BLOC-1-related complex subunit 6 (360 aa).

The segment covering 1–10 (MEAARGRLGP) has biased composition (basic and acidic residues). The tract at residues 1 to 201 (MEAARGRLGP…AGAGGGRRAT (201 aa)) is disordered. The span at 23-35 (VTFSGRPSRTLSK) shows a compositional bias: polar residues. Position 41 is a phosphothreonine (Thr-41). Residues 71–83 (HRPELDTWEDKPS) show a composition bias toward basic and acidic residues. Positions 89 to 100 (SGARGSRGTSGS) are enriched in low complexity. Phosphoserine is present on Ser-130. The span at 144-156 (EGDDDDDGDDEEA) shows a compositional bias: acidic residues. Ser-173 bears the Phosphoserine mark. A compositionally biased stretch (gly residues) spans 179–198 (GACGGGGSSSSGEAGAGGGR). Thr-201 carries the post-translational modification Phosphothreonine. Ser-204 bears the Phosphoserine mark.

The protein belongs to the BORCS6 family. In terms of assembly, component of the BLOC-one-related complex (BORC) which is composed of BLOC1S1, BLOC1S2, BORCS5, BORCS6, BORCS7, BORCS8, KXD1 and SNAPIN.

Its subcellular location is the lysosome membrane. Functionally, as part of the BORC complex may play a role in lysosomes movement and localization at the cell periphery. Associated with the cytosolic face of lysosomes, the BORC complex may recruit ARL8B and couple lysosomes to microtubule plus-end-directed kinesin motor. This Rattus norvegicus (Rat) protein is BLOC-1-related complex subunit 6.